The following is a 149-amino-acid chain: 3-hydroxyacyl-[acyl-carrier-protein] dehydratase FabZ (149 aa).

His-49 is a catalytic residue.

This sequence belongs to the thioester dehydratase family. FabZ subfamily.

The protein resides in the cytoplasm. The enzyme catalyses a (3R)-hydroxyacyl-[ACP] = a (2E)-enoyl-[ACP] + H2O. Functionally, involved in unsaturated fatty acids biosynthesis. Catalyzes the dehydration of short chain beta-hydroxyacyl-ACPs and long chain saturated and unsaturated beta-hydroxyacyl-ACPs. This Sulfurovum sp. (strain NBC37-1) protein is 3-hydroxyacyl-[acyl-carrier-protein] dehydratase FabZ.